Here is a 437-residue protein sequence, read N- to C-terminus: Serine--tRNA ligase (437 aa).

L-serine is bound at residue 227-229; it reads TAE. Residues 258–260 and V274 each bind ATP; that span reads RSE. Position 281 (E281) interacts with L-serine. 347-350 is a binding site for ATP; that stretch reads ETHS. T382 provides a ligand contact to L-serine.

It belongs to the class-II aminoacyl-tRNA synthetase family. Type-1 seryl-tRNA synthetase subfamily. Homodimer. The tRNA molecule binds across the dimer.

Its subcellular location is the cytoplasm. The enzyme catalyses tRNA(Ser) + L-serine + ATP = L-seryl-tRNA(Ser) + AMP + diphosphate + H(+). The catalysed reaction is tRNA(Sec) + L-serine + ATP = L-seryl-tRNA(Sec) + AMP + diphosphate + H(+). It functions in the pathway aminoacyl-tRNA biosynthesis; selenocysteinyl-tRNA(Sec) biosynthesis; L-seryl-tRNA(Sec) from L-serine and tRNA(Sec): step 1/1. Functionally, catalyzes the attachment of serine to tRNA(Ser). Is also able to aminoacylate tRNA(Sec) with serine, to form the misacylated tRNA L-seryl-tRNA(Sec), which will be further converted into selenocysteinyl-tRNA(Sec). The sequence is that of Serine--tRNA ligase from Deinococcus geothermalis (strain DSM 11300 / CIP 105573 / AG-3a).